The chain runs to 435 residues: Bifunctional protein GlmU (435 aa).

Positions 1–224 (MNDTSIIILA…EQNFMGINDK (224 aa)) are pyrophosphorylase. Residues 9 to 12 (LAAG), Lys23, Gln75, and 82 to 83 (GT) contribute to the UDP-N-acetyl-alpha-D-glucosamine site. Asp103 lines the Mg(2+) pocket. UDP-N-acetyl-alpha-D-glucosamine is bound by residues Gly136, Glu150, Asn165, and Asn222. Position 222 (Asn222) interacts with Mg(2+). The interval 225–245 (FQLSVAEKIMQDEIKQDLMKA) is linker. The interval 246 to 435 (GVLMRLPESI…KFFGKNNAEK (190 aa)) is N-acetyltransferase. 2 residues coordinate UDP-N-acetyl-alpha-D-glucosamine: Arg309 and Lys326. The Proton acceptor role is filled by His337. 2 residues coordinate UDP-N-acetyl-alpha-D-glucosamine: Tyr340 and Asn351. Residues 360 to 361 (NY), Ser379, Ala397, and Arg414 contribute to the acetyl-CoA site.

The protein in the N-terminal section; belongs to the N-acetylglucosamine-1-phosphate uridyltransferase family. This sequence in the C-terminal section; belongs to the transferase hexapeptide repeat family. In terms of assembly, homotrimer. Mg(2+) is required as a cofactor.

It localises to the cytoplasm. It catalyses the reaction alpha-D-glucosamine 1-phosphate + acetyl-CoA = N-acetyl-alpha-D-glucosamine 1-phosphate + CoA + H(+). The enzyme catalyses N-acetyl-alpha-D-glucosamine 1-phosphate + UTP + H(+) = UDP-N-acetyl-alpha-D-glucosamine + diphosphate. Its pathway is nucleotide-sugar biosynthesis; UDP-N-acetyl-alpha-D-glucosamine biosynthesis; N-acetyl-alpha-D-glucosamine 1-phosphate from alpha-D-glucosamine 6-phosphate (route II): step 2/2. The protein operates within nucleotide-sugar biosynthesis; UDP-N-acetyl-alpha-D-glucosamine biosynthesis; UDP-N-acetyl-alpha-D-glucosamine from N-acetyl-alpha-D-glucosamine 1-phosphate: step 1/1. It functions in the pathway bacterial outer membrane biogenesis; LPS lipid A biosynthesis. Its function is as follows. Catalyzes the last two sequential reactions in the de novo biosynthetic pathway for UDP-N-acetylglucosamine (UDP-GlcNAc). The C-terminal domain catalyzes the transfer of acetyl group from acetyl coenzyme A to glucosamine-1-phosphate (GlcN-1-P) to produce N-acetylglucosamine-1-phosphate (GlcNAc-1-P), which is converted into UDP-GlcNAc by the transfer of uridine 5-monophosphate (from uridine 5-triphosphate), a reaction catalyzed by the N-terminal domain. This Campylobacter curvus (strain 525.92) protein is Bifunctional protein GlmU.